A 293-amino-acid polypeptide reads, in one-letter code: 4-diphosphocytidyl-2-C-methyl-D-erythritol kinase (293 aa).

Lysine 10 is an active-site residue. 94-104 (PVSAGLAGGSS) provides a ligand contact to ATP. The active site involves aspartate 136.

Belongs to the GHMP kinase family. IspE subfamily.

It catalyses the reaction 4-CDP-2-C-methyl-D-erythritol + ATP = 4-CDP-2-C-methyl-D-erythritol 2-phosphate + ADP + H(+). It functions in the pathway isoprenoid biosynthesis; isopentenyl diphosphate biosynthesis via DXP pathway; isopentenyl diphosphate from 1-deoxy-D-xylulose 5-phosphate: step 3/6. Catalyzes the phosphorylation of the position 2 hydroxy group of 4-diphosphocytidyl-2C-methyl-D-erythritol. The protein is 4-diphosphocytidyl-2-C-methyl-D-erythritol kinase of Listeria monocytogenes serotype 4b (strain CLIP80459).